Here is a 43-residue protein sequence, read N- to C-terminus: Protein PsbN 1 (43 aa).

The chain crosses the membrane as a helical span at residues 3 to 23 (TATILGILIAAAVVGITVLAL).

This sequence belongs to the PsbN family.

It is found in the cellular thylakoid membrane. May play a role in photosystem I and II biogenesis. The chain is Protein PsbN 1 from Microcystis aeruginosa (strain NIES-843 / IAM M-2473).